A 661-amino-acid polypeptide reads, in one-letter code: Heme transporter BhuA (661 aa).

The N-terminal stretch at 1-23 (MKFTRTLVLASTSLLATVATSQA) is a signal peptide. Residues 48 to 159 (KDNIEATGGT…AAGAIRYETV (112 aa)) form the TBDR plug domain. The TBDR beta-barrel domain maps to 170–661 (TFGARIIGSY…TFTFQTAFKF (492 aa)).

It belongs to the TonB-dependent receptor family.

Its subcellular location is the cell outer membrane. In terms of biological role, heme transporter. The protein is Heme transporter BhuA (bhuA) of Brucella abortus biovar 1 (strain 9-941).